A 315-amino-acid chain; its full sequence is Methionyl-tRNA formyltransferase (315 aa).

111–114 (SLLP) provides a ligand contact to (6S)-5,6,7,8-tetrahydrofolate.

It belongs to the Fmt family.

The enzyme catalyses L-methionyl-tRNA(fMet) + (6R)-10-formyltetrahydrofolate = N-formyl-L-methionyl-tRNA(fMet) + (6S)-5,6,7,8-tetrahydrofolate + H(+). Its function is as follows. Attaches a formyl group to the free amino group of methionyl-tRNA(fMet). The formyl group appears to play a dual role in the initiator identity of N-formylmethionyl-tRNA by promoting its recognition by IF2 and preventing the misappropriation of this tRNA by the elongation apparatus. The chain is Methionyl-tRNA formyltransferase from Flavobacterium johnsoniae (strain ATCC 17061 / DSM 2064 / JCM 8514 / BCRC 14874 / CCUG 350202 / NBRC 14942 / NCIMB 11054 / UW101) (Cytophaga johnsonae).